The following is a 295-amino-acid chain: Acetylglutamate kinase (295 aa).

Residues 61–62, Arg-83, and Asn-187 each bind substrate; that span reads GG.

The protein belongs to the acetylglutamate kinase family. ArgB subfamily.

It is found in the cytoplasm. It catalyses the reaction N-acetyl-L-glutamate + ATP = N-acetyl-L-glutamyl 5-phosphate + ADP. The protein operates within amino-acid biosynthesis; L-arginine biosynthesis; N(2)-acetyl-L-ornithine from L-glutamate: step 2/4. Functionally, catalyzes the ATP-dependent phosphorylation of N-acetyl-L-glutamate. The chain is Acetylglutamate kinase from Methanocorpusculum labreanum (strain ATCC 43576 / DSM 4855 / Z).